Consider the following 343-residue polypeptide: Endoplasmic reticulum-resident calcium binding protein (343 aa).

A signal peptide spans 1-26 (MMKINLYKLLCFICVIFLLHKNVVRS). EF-hand domains are found at residues 59–94 (GAKERIEKLFHLIDKNNDKEITEEELNTWSSFLKNE), 95–130 (IFLKQVQAEMGQIDSDKDGFISLNELNDAFAQNLDA), 135–170 (KHSEGLLKRFQIVDKDKDGKLSINEVGLLIDPMKDE), 172–207 (LKELEINEILEHHDVNKDGKISLDEFKQTRSDESSG), and 210–245 (KDDEMALDDFNFFDANKDGFIDKEEIIKVYFDPAHE). Ca(2+)-binding residues include D72, N74, D76, E78, E83, D108, D110, D112, E119, D148, D150, D152, K154, E159, D185, N187, D189, K191, E196, D223, N225, D227, and E234. Acidic residues predominate over residues 313–331 (EDDDMDADNTEDDKDEADD). The tract at residues 313-343 (EDDDMDADNTEDDKDEADDASQQKSPAIDEL) is disordered.

Belongs to the CREC family.

It is found in the endoplasmic reticulum. In terms of biological role, calcium-binding protein. Required for schizont to ring transition. Required for the breakdown of the parasitophorous vacuole membrane during egress. Required for the proteolytic maturation of apical membrane antigen 1 (AMA-1) during egress. Required for the proteolytic maturation of subtilisin-like protease 1 (SUB1) during egress. Required for the proteolytic maturation of plasmepsin X (PMX) during egress. This chain is Endoplasmic reticulum-resident calcium binding protein, found in Plasmodium falciparum (isolate 3D7).